Here is a 238-residue protein sequence, read N- to C-terminus: MTHVEVVATITPQLYIEETLIQKINHRIDAIDVLELRIDQFENVTVDQVAEMITKLKVMQDSFKLLVTYRTKLQGGYGQFTNDSYLNLISDLANINGIDMIDIEWQADIDIEKHQRIITHLQQYNKEVIISHHNFESTPPLDELQFIFFKMQKFNPEYVKLAVMPHNKNDVLNLLQAMSTFSDTMDCKVVGISMSKLGLISRTAQGVFGGALTYGCIGEPQAPGQIDVTDLKAQVTLY.

3-dehydroquinate contacts are provided by residues 35 to 37 (ELR) and R70. H133 acts as the Proton donor/acceptor in catalysis. K160 serves as the catalytic Schiff-base intermediate with substrate. The 3-dehydroquinate site is built by R202 and Q225.

Belongs to the type-I 3-dehydroquinase family. In terms of assembly, homodimer.

It catalyses the reaction 3-dehydroquinate = 3-dehydroshikimate + H2O. It functions in the pathway metabolic intermediate biosynthesis; chorismate biosynthesis; chorismate from D-erythrose 4-phosphate and phosphoenolpyruvate: step 3/7. In terms of biological role, involved in the third step of the chorismate pathway, which leads to the biosynthesis of aromatic amino acids. Catalyzes the cis-dehydration of 3-dehydroquinate (DHQ) and introduces the first double bond of the aromatic ring to yield 3-dehydroshikimate. This is 3-dehydroquinate dehydratase from Staphylococcus aureus (strain MRSA252).